The following is a 276-amino-acid chain: Large ribosomal subunit protein uL2 (276 aa).

The tract at residues 218 to 255 (PTVRGSAMNPCDHPHGGGEGRTPIGMSSPVTPWGKPAL) is disordered.

This sequence belongs to the universal ribosomal protein uL2 family. In terms of assembly, part of the 50S ribosomal subunit. Forms a bridge to the 30S subunit in the 70S ribosome.

Functionally, one of the primary rRNA binding proteins. Required for association of the 30S and 50S subunits to form the 70S ribosome, for tRNA binding and peptide bond formation. It has been suggested to have peptidyltransferase activity; this is somewhat controversial. Makes several contacts with the 16S rRNA in the 70S ribosome. The protein is Large ribosomal subunit protein uL2 of Clostridium tetani (strain Massachusetts / E88).